We begin with the raw amino-acid sequence, 61 residues long: Truncated Cytokine response-modifying protein B (61 aa).

Its function is as follows. The protein is truncated in this strain and presumably inactive. It has similarities with variola virus CrmB, but the product is inactivated due to several premature stop codon. The protein is Truncated Cytokine response-modifying protein B of Bos taurus (Bovine).